Here is a 63-residue protein sequence, read N- to C-terminus: 2-hydroxymuconate tautomerase (63 aa).

The active-site Proton acceptor; via imino nitrogen is the Pro-2.

The protein belongs to the 4-oxalocrotonate tautomerase family. As to quaternary structure, homohexamer.

It carries out the reaction (2Z,4E)-2-hydroxyhexa-2,4-dienedioate = (3E)-2-oxohex-3-enedioate. Its pathway is aromatic compound metabolism; salicylate degradation. Functionally, catalyzes the ketonization of 2-hydroxymuconate stereoselectively to yield 2-oxo-3-hexenedioate. In Stutzerimonas stutzeri (Pseudomonas stutzeri), this protein is 2-hydroxymuconate tautomerase (nahJ).